The chain runs to 683 residues: MTDTGPLQPDRPDLDRPLSVDAPFEPAGDQPDAIETLVAGFESGAEKQTLLGVTGSGKTNTVSWVLEELQQPTLVLAHNKTLAAQLYEEFRELFPDNAVEYFVSYYDYYQPEAYVEQTDTYIDKDMSINEEIERLRHSATRSLLTRDDVIVVASVSAIYGLGDPANYEEMALRLEAGDERSREDLLSALVELNYERNDVDFQQGTFRVRGDTVEIYPMYGRHAVRVEFWGDEIDRLLKVDIVDGEVVSEEPATLIHPAEHYSVPDRRLETAIEEIEGLLEDRIDYFERQGDLVAAQRIEERTTFDIEMLQETGHCSGIENYSVHMSDRETGEPPYTLLDYFPDGFLTVIDESHQTIPQIKGQFEGDRSRKESLVENGFRLPTAYDNRPLKFEEFEAKTDRTLYVSATPGDYERDHSEQVVEQIVRPTYLVDPDIEVEPAEKQVEDLIERIQATPEDERVLVTTLTKRMAEDLTEYLENAGVDVAYMHDETDTLERHELVRSLRLGEIQVLVGINLLREGLDIPEVSLVAILDADQEGFLRSETTLVQTMGRAARNVEGSVVLYADETTDSMAAAIEETRRRREIQREFNAEHGHEPRTIEKPVSETNLPGSSTDTDGVADVAPDTVDEAEQLIERLETRMQEAADNLEFELAADIRDRIRELRETFDGLEDPNEGVPSPDEEF.

The tract at residues 1–29 is disordered; it reads MTDTGPLQPDRPDLDRPLSVDAPFEPAGD. In terms of domain architecture, Helicase ATP-binding spans 39-417; the sequence is AGFESGAEKQ…PGDYERDHSE (379 aa). An ATP-binding site is contributed by 52-59; the sequence is GVTGSGKT. The Beta-hairpin signature appears at 105–128; sequence YYDYYQPEAYVEQTDTYIDKDMSI. The region spanning 442 to 604 is the Helicase C-terminal domain; the sequence is QVEDLIERIQ…EPRTIEKPVS (163 aa). Residues 587 to 603 are compositionally biased toward basic and acidic residues; the sequence is EFNAEHGHEPRTIEKPV. The interval 587–620 is disordered; the sequence is EFNAEHGHEPRTIEKPVSETNLPGSSTDTDGVAD. The span at 604–615 shows a compositional bias: polar residues; it reads SETNLPGSSTDT. The UVR domain maps to 630–665; sequence EQLIERLETRMQEAADNLEFELAADIRDRIRELRET.

The protein belongs to the UvrB family. In terms of assembly, forms a heterotetramer with UvrA during the search for lesions. Interacts with UvrC in an incision complex.

It is found in the cytoplasm. In terms of biological role, the UvrABC repair system catalyzes the recognition and processing of DNA lesions. A damage recognition complex composed of 2 UvrA and 2 UvrB subunits scans DNA for abnormalities. Upon binding of the UvrA(2)B(2) complex to a putative damaged site, the DNA wraps around one UvrB monomer. DNA wrap is dependent on ATP binding by UvrB and probably causes local melting of the DNA helix, facilitating insertion of UvrB beta-hairpin between the DNA strands. Then UvrB probes one DNA strand for the presence of a lesion. If a lesion is found the UvrA subunits dissociate and the UvrB-DNA preincision complex is formed. This complex is subsequently bound by UvrC and the second UvrB is released. If no lesion is found, the DNA wraps around the other UvrB subunit that will check the other stand for damage. This Natronomonas pharaonis (strain ATCC 35678 / DSM 2160 / CIP 103997 / JCM 8858 / NBRC 14720 / NCIMB 2260 / Gabara) (Halobacterium pharaonis) protein is UvrABC system protein B.